Consider the following 554-residue polypeptide: Dihydroxy-acid dehydratase (554 aa).

Asp-78 contributes to the Mg(2+) binding site. Residue Cys-119 coordinates [2Fe-2S] cluster. Residues Asp-120 and Lys-121 each coordinate Mg(2+). At Lys-121 the chain carries N6-carboxylysine. Cys-191 lines the [2Fe-2S] cluster pocket. Glu-442 is a Mg(2+) binding site. Catalysis depends on Ser-468, which acts as the Proton acceptor.

Belongs to the IlvD/Edd family. As to quaternary structure, homodimer. Requires [2Fe-2S] cluster as cofactor. It depends on Mg(2+) as a cofactor.

The catalysed reaction is (2R)-2,3-dihydroxy-3-methylbutanoate = 3-methyl-2-oxobutanoate + H2O. The enzyme catalyses (2R,3R)-2,3-dihydroxy-3-methylpentanoate = (S)-3-methyl-2-oxopentanoate + H2O. It participates in amino-acid biosynthesis; L-isoleucine biosynthesis; L-isoleucine from 2-oxobutanoate: step 3/4. The protein operates within amino-acid biosynthesis; L-valine biosynthesis; L-valine from pyruvate: step 3/4. In terms of biological role, functions in the biosynthesis of branched-chain amino acids. Catalyzes the dehydration of (2R,3R)-2,3-dihydroxy-3-methylpentanoate (2,3-dihydroxy-3-methylvalerate) into 2-oxo-3-methylpentanoate (2-oxo-3-methylvalerate) and of (2R)-2,3-dihydroxy-3-methylbutanoate (2,3-dihydroxyisovalerate) into 2-oxo-3-methylbutanoate (2-oxoisovalerate), the penultimate precursor to L-isoleucine and L-valine, respectively. The sequence is that of Dihydroxy-acid dehydratase from Hydrogenobaculum sp. (strain Y04AAS1).